Here is a 398-residue protein sequence, read N- to C-terminus: Phosphoglycerate kinase (398 aa).

Residues Asp21–Asn23, Arg36, His59–Arg62, Arg119, and Arg157 contribute to the substrate site. ATP is bound by residues Lys208, Gly296, Glu327, and Gly354–Ser357.

Belongs to the phosphoglycerate kinase family. Monomer.

It localises to the cytoplasm. It carries out the reaction (2R)-3-phosphoglycerate + ATP = (2R)-3-phospho-glyceroyl phosphate + ADP. Its pathway is carbohydrate degradation; glycolysis; pyruvate from D-glyceraldehyde 3-phosphate: step 2/5. In Streptococcus pneumoniae serotype 4 (strain ATCC BAA-334 / TIGR4), this protein is Phosphoglycerate kinase.